The sequence spans 243 residues: UPF0246 protein MGAS10750_Spy1880 (243 aa).

This sequence belongs to the UPF0246 family.

The chain is UPF0246 protein MGAS10750_Spy1880 from Streptococcus pyogenes serotype M4 (strain MGAS10750).